The sequence spans 113 residues: UPF0342 protein SZO_10960 (113 aa).

This sequence belongs to the UPF0342 family.

This Streptococcus equi subsp. zooepidemicus (strain H70) protein is UPF0342 protein SZO_10960.